A 799-amino-acid chain; its full sequence is Cadherin-8 (799 aa).

Positions 1–29 are cleaved as a signal peptide; it reads MPERLAEMLLDLWTPLIILWITLPPCIYM. The propeptide occupies 30–61; it reads APMNQSQVLMSGSPLELNSLGEEQRILNRSKR. Asparagine 33 and asparagine 57 each carry an N-linked (GlcNAc...) asparagine glycan. Cadherin domains follow at residues 62–167, 168–276, 277–391, 392–494, and 495–616; these read GWVW…APEF, LNGP…PPKF, AQSL…PPVF, SSPT…DNAP, and EFAS…YVLP. Residues 62–621 are Extracellular-facing; it reads GWVWNQMFVL…AYVLPIGLSM (560 aa). Asparagine 188 carries an N-linked (GlcNAc...) asparagine glycan. N-linked (GlcNAc...) asparagine glycosylation is found at asparagine 463, asparagine 473, and asparagine 544. The chain crosses the membrane as a helical span at residues 622-642; the sequence is GALIAILACIILLLVIVVLFV. The Cytoplasmic segment spans residues 643-799; sequence TLRRHKNEPL…YSVGESDKET (157 aa). Position 795 is a phosphoserine (serine 795).

As to expression, mainly expressed in brain. Found in certain nerve cell lines, such as retinoblasts, glioma cells and neuroblasts.

It localises to the cell membrane. Cadherins are calcium-dependent cell adhesion proteins. They preferentially interact with themselves in a homophilic manner in connecting cells; cadherins may thus contribute to the sorting of heterogeneous cell types. The chain is Cadherin-8 (CDH8) from Homo sapiens (Human).